Here is a 150-residue protein sequence, read N- to C-terminus: Large ribosomal subunit protein bL9 (150 aa).

This sequence belongs to the bacterial ribosomal protein bL9 family.

Binds to the 23S rRNA. The sequence is that of Large ribosomal subunit protein bL9 from Neisseria meningitidis serogroup B (strain ATCC BAA-335 / MC58).